The sequence spans 174 residues: Protein C2-DOMAIN ABA-RELATED 2 (174 aa).

Met1 is modified (N-acetylmethionine). Residues Met1–Gly104 enclose the C2 domain. 7 residues coordinate Ca(2+): Arg21, Asp22, Asp27, Asp73, Arg74, Asp75, and Asp81.

The protein belongs to the plant CAR protein family. Binds to PYR/PYL/RCAR abscisic acid intracellular receptors in an ABA-independent manner, both at the plasma membrane and in the nucleus. Ca(2+) serves as cofactor.

The protein resides in the cell membrane. The protein localises to the nucleus. Stimulates the GTPase/ATPase activities of Obg-like ATPases. Mediates the transient calcium-dependent interaction of PYR/PYL/RCAR abscisic acid (ABA) receptors with the plasma membrane and thus regulates ABA sensitivity. In Arabidopsis thaliana (Mouse-ear cress), this protein is Protein C2-DOMAIN ABA-RELATED 2.